Reading from the N-terminus, the 430-residue chain is Serine hydroxymethyltransferase (430 aa).

120–122 (GHI) contributes to the (6S)-5,6,7,8-tetrahydrofolate binding site. N6-(pyridoxal phosphate)lysine is present on K226.

Belongs to the SHMT family. Homodimer. Pyridoxal 5'-phosphate serves as cofactor.

The protein resides in the cytoplasm. It participates in amino-acid biosynthesis; glycine biosynthesis; glycine from L-serine: step 1/1. Its function is as follows. Catalyzes the reversible interconversion of serine and glycine with a modified folate serving as the one-carbon carrier. Also exhibits a pteridine-independent aldolase activity toward beta-hydroxyamino acids, producing glycine and aldehydes, via a retro-aldol mechanism. This is Serine hydroxymethyltransferase from Pyrobaculum aerophilum (strain ATCC 51768 / DSM 7523 / JCM 9630 / CIP 104966 / NBRC 100827 / IM2).